A 110-amino-acid polypeptide reads, in one-letter code: Large ribosomal subunit protein P2 (110 aa).

Residues 63 to 110 (ASVPSGGGVAAAAPAAGGGGADPAEAKEEKKEEPEEESDDDMGFGLFD) are disordered. The segment covering 86 to 95 (AEAKEEKKEE) has biased composition (basic and acidic residues).

It belongs to the eukaryotic ribosomal protein P1/P2 family. In terms of assembly, P1 and P2 exist as dimers at the large ribosomal subunit. In terms of processing, phosphorylated.

Functionally, plays an important role in the elongation step of protein synthesis. The protein is Large ribosomal subunit protein P2 of Cryptochiton stelleri (Giant gumboot chiton).